We begin with the raw amino-acid sequence, 933 residues long: Serine/threonine-protein kinase EDR1 (933 aa).

Residues 1–10 (MKHIFKKLHR) are compositionally biased toward basic residues. Disordered stretches follow at residues 1-74 (MKHI…ADYM), 342-424 (CNSN…TAIG), 527-550 (HRDP…AISS), and 604-650 (HGQQ…YRND). Residues 37–48 (NPPQATPSSVTE) show a composition bias toward polar residues. The span at 53-68 (AGATSSMASPAPTAAS) shows a compositional bias: low complexity. Residues 342-356 (CNSNGNKFPTAQFSN) show a composition bias toward polar residues. Low complexity predominate over residues 367-378 (SSHSSMANYSSS). Basic and acidic residues predominate over residues 379–389 (LDRRTEAERTD). The segment covering 404 to 413 (SSPSSVTSST) has biased composition (low complexity). Polar residues predominate over residues 533–550 (GNTQSSYATSSSNGAISS). The segment covering 607-621 (QNDESHIHDHRKYTS) has biased composition (basic and acidic residues). Positions 669-925 (LVIAERIGLG…QLTEVLKPLN (257 aa)) constitute a Protein kinase domain. Residues 675–683 (IGLGSYGEV) and K696 contribute to the ATP site. Catalysis depends on D792, which acts as the Proton acceptor.

It belongs to the protein kinase superfamily. TKL Ser/Thr protein kinase family. RAF subfamily. In terms of assembly, interacts with KEG. Binds and recruited by EDR4 at the powdery mildew (e.g. G.cichoracearum) penetration site on the plasma membrane. Post-translationally, autophosphorylated.

It localises to the cell membrane. Its subcellular location is the endosome. The protein resides in the nucleus. The protein localises to the endoplasmic reticulum. It is found in the golgi apparatus. It localises to the trans-Golgi network. Its subcellular location is the early endosome. The catalysed reaction is L-seryl-[protein] + ATP = O-phospho-L-seryl-[protein] + ADP + H(+). It catalyses the reaction L-threonyl-[protein] + ATP = O-phospho-L-threonyl-[protein] + ADP + H(+). In terms of biological role, MAPKKK serine/threonine-protein kinase involved in the regulation of a MAP kinase cascade (probably including MPK3 and MPK6) that negatively regulates salicylic acid- (SA-) dependent defense responses, abscisic acid (ABA) signaling, and ethylene-induced senescence. Also modulates stress response (e.g. drought) signaling and cell death, in an ORE9-dependent manner. Functions at a point of cross talk between ethylene, ABA and SA signaling that impinges on senescence and cell death. On the other hand, it confers sensitivity to various pathogens such as the fungus E.cichoracearum, the oomycete H.parasitica and the bacteria P.syringae pv. tomato DC3000. Required for resistance to some hemibiotrophic/necrotrophic fungal pathogens (e.g. C.gloeosporioides, C.higginsianum and A.brassicicola) through the induction of defensin expression, probably by repressing MYC2, an inhibitor of defensin genes (PDFs). Together with KEG, may regulate endocytic trafficking and/or the formation of signaling complexes on trans-Golgi network (TGN)/ early endosome (EE) vesicles during stress responses. The chain is Serine/threonine-protein kinase EDR1 (EDR1) from Arabidopsis thaliana (Mouse-ear cress).